A 126-amino-acid polypeptide reads, in one-letter code: Plastocyanin (126 aa).

The signal sequence occupies residues 1–28; the sequence is MSKKFLTILAGLLLVVSSFFLSVSPAAA. A Plastocyanin-like domain is found at 29–126; sequence ANATVKMGSD…AGMVGKVVVE (98 aa). The Cu cation site is built by H67, C111, H114, and M119.

This sequence belongs to the plastocyanin family. Cu(2+) is required as a cofactor.

It is found in the cellular thylakoid membrane. Its function is as follows. Participates in electron transfer between P700 and the cytochrome b6-f complex in photosystem I. The chain is Plastocyanin (petE) from Synechocystis sp. (strain ATCC 27184 / PCC 6803 / Kazusa).